The following is a 115-amino-acid chain: MNLMLTLFTNATLASLLILIAFWLPQSYAYAEKVTPYECGFDPMGSARLPFSMKFFLVAITFLLFDLEIALLLPLPWAIQATNLNLVLFMALALITLLALSLAYEWIQKGLEWVE.

The next 3 membrane-spanning stretches (helical) occupy residues 3 to 23 (LMLT…IAFW), 55 to 75 (FFLV…LLPL), and 87 to 107 (VLFM…YEWI).

It belongs to the complex I subunit 3 family. In terms of assembly, core subunit of respiratory chain NADH dehydrogenase (Complex I) which is composed of 45 different subunits. Interacts with TMEM186. Interacts with TMEM242.

It localises to the mitochondrion inner membrane. It carries out the reaction a ubiquinone + NADH + 5 H(+)(in) = a ubiquinol + NAD(+) + 4 H(+)(out). Its function is as follows. Core subunit of the mitochondrial membrane respiratory chain NADH dehydrogenase (Complex I) which catalyzes electron transfer from NADH through the respiratory chain, using ubiquinone as an electron acceptor. Essential for the catalytic activity of complex I. This is NADH-ubiquinone oxidoreductase chain 3 from Dugong dugon (Dugong).